The following is a 72-amino-acid chain: Large ribosomal subunit protein bL31 (72 aa).

Residues Cys-16, Cys-18, Cys-37, and Cys-40 each coordinate Zn(2+).

Belongs to the bacterial ribosomal protein bL31 family. Type A subfamily. In terms of assembly, part of the 50S ribosomal subunit. Requires Zn(2+) as cofactor.

Functionally, binds the 23S rRNA. This is Large ribosomal subunit protein bL31 from Pseudomonas fluorescens (strain Pf0-1).